An 85-amino-acid polypeptide reads, in one-letter code: ATP synthase subunit c (85 aa).

Transmembrane regions (helical) follow at residues 10-30 (IAVA…FAVL) and 53-73 (FIIA…ALLF).

It belongs to the ATPase C chain family. In terms of assembly, F-type ATPases have 2 components, F(1) - the catalytic core - and F(0) - the membrane proton channel. F(1) has five subunits: alpha(3), beta(3), gamma(1), delta(1), epsilon(1). F(0) has three main subunits: a(1), b(2) and c(10-14). The alpha and beta chains form an alternating ring which encloses part of the gamma chain. F(1) is attached to F(0) by a central stalk formed by the gamma and epsilon chains, while a peripheral stalk is formed by the delta and b chains.

The protein resides in the cell inner membrane. F(1)F(0) ATP synthase produces ATP from ADP in the presence of a proton or sodium gradient. F-type ATPases consist of two structural domains, F(1) containing the extramembraneous catalytic core and F(0) containing the membrane proton channel, linked together by a central stalk and a peripheral stalk. During catalysis, ATP synthesis in the catalytic domain of F(1) is coupled via a rotary mechanism of the central stalk subunits to proton translocation. Functionally, key component of the F(0) channel; it plays a direct role in translocation across the membrane. A homomeric c-ring of between 10-14 subunits forms the central stalk rotor element with the F(1) delta and epsilon subunits. The polypeptide is ATP synthase subunit c (Vibrio cholerae serotype O1 (strain ATCC 39315 / El Tor Inaba N16961)).